Reading from the N-terminus, the 272-residue chain is Outer surface protein A (272 aa).

A signal peptide spans 1 to 16 (MKKYLLGIGLILALIA). Residue Cys17 is the site of N-palmitoyl cysteine attachment. Residue Cys17 is the site of S-diacylglycerol cysteine attachment.

The protein belongs to the OspA lipoprotein family.

Its subcellular location is the cell outer membrane. The protein resides in the cell surface. This chain is Outer surface protein A, found in Borreliella burgdorferi (Lyme disease spirochete).